The following is a 111-amino-acid chain: Stress-response A/B barrel domain-containing protein At5g22580 (111 aa).

The Stress-response A/B barrel domain occupies 6-98 (FKHLVVVKFK…VIDKIVLLDF (93 aa)). Mg(2+) contacts are provided by V31, I34, D35, and V37.

Homodimer. It depends on Mg(2+) as a cofactor.

Its function is as follows. Involved in stress response. The protein is Stress-response A/B barrel domain-containing protein At5g22580 of Arabidopsis thaliana (Mouse-ear cress).